Here is a 349-residue protein sequence, read N- to C-terminus: MATGTLPDAGQILNSLINSILLVDDDLAVHYANPAAQQLLAQSSRKLFGTPLPELLSYFSLNIGLMQESLAAGQGFTDNEVTLVIDGRSHILSLTAQRLPEGYILLEMAPMDNQRRLSQEQLQHAQQIAARDLVRGLAHEIKNPLGGLRGAAQLLSKALPDPALMEYTKVIIEQADRLRNLVDRLLGPQHPGMHVTESIHKVAERVVKLVSMELPDNVKLVRDYDPSLPELPHDPDQIEQVLLNIVRNALQALGPEGGEITLRTRTAFQLTLHGVRYRLAARIDVEDNGPGIPSHLQDTLFYPMVSGREGGTGLGLSIARSLIDQHSGKIEFTSWPGHTEFSVYLPIRK.

Positions 5–78 constitute a PAS domain; that stretch reads TLPDAGQILN…SLAAGQGFTD (74 aa). Residues 136–349 form the Histidine kinase domain; the sequence is GLAHEIKNPL…EFSVYLPIRK (214 aa). Histidine 139 is subject to Phosphohistidine; by autocatalysis. Position 329 (lysine 329) interacts with ATP.

Post-translationally, autophosphorylated.

It is found in the cytoplasm. It catalyses the reaction ATP + protein L-histidine = ADP + protein N-phospho-L-histidine.. Its function is as follows. Member of the two-component regulatory system NtrB/NtrC, which controls expression of the nitrogen-regulated (ntr) genes in response to nitrogen limitation. Under conditions of nitrogen limitation, NtrB autophosphorylates and transfers the phosphoryl group to NtrC. In the presence of nitrogen, acts as a phosphatase that dephosphorylates and inactivates NtrC. This chain is Sensory histidine kinase/phosphatase NtrB (ntrB), found in Klebsiella oxytoca.